Reading from the N-terminus, the 311-residue chain is tRNA-cytidine(32) 2-sulfurtransferase (311 aa).

The PP-loop motif signature appears at 45–50 (SGGKDS). The [4Fe-4S] cluster site is built by Cys120, Cys123, and Cys211.

This sequence belongs to the TtcA family. Homodimer. The cofactor is Mg(2+). Requires [4Fe-4S] cluster as cofactor.

Its subcellular location is the cytoplasm. The enzyme catalyses cytidine(32) in tRNA + S-sulfanyl-L-cysteinyl-[cysteine desulfurase] + AH2 + ATP = 2-thiocytidine(32) in tRNA + L-cysteinyl-[cysteine desulfurase] + A + AMP + diphosphate + H(+). It participates in tRNA modification. Its function is as follows. Catalyzes the ATP-dependent 2-thiolation of cytidine in position 32 of tRNA, to form 2-thiocytidine (s(2)C32). The sulfur atoms are provided by the cysteine/cysteine desulfurase (IscS) system. The protein is tRNA-cytidine(32) 2-sulfurtransferase of Shewanella halifaxensis (strain HAW-EB4).